A 140-amino-acid chain; its full sequence is Fatty acid-binding protein 12 (140 aa).

Residues Arg107 and 127–129 contribute to the a fatty acid site; that span reads RTY.

It belongs to the calycin superfamily. Fatty-acid binding protein (FABP) family. Expressed in a number of retinoblastoma cell lines.

Functionally, may play a role in lipid transport. The sequence is that of Fatty acid-binding protein 12 (FABP12) from Homo sapiens (Human).